Reading from the N-terminus, the 470-residue chain is Ribosomal protein uS12 methylthiotransferase RimO (470 aa).

The MTTase N-terminal domain occupies 4–120 (TRVYLHTLGC…IARVVSDAQA (117 aa)). [4Fe-4S] cluster contacts are provided by Cys-13, Cys-49, Cys-83, Cys-155, Cys-159, and Cys-162. A Radical SAM core domain is found at 141-371 (SLPSHTAYLK…MALQQEISRE (231 aa)). The TRAM domain occupies 374 to 442 (RAMVGRRLEV…EYDLVGHVVA (69 aa)). The segment at 447 to 470 (RARRPLPAPAGGETPRRGGLPVVG) is disordered.

Belongs to the methylthiotransferase family. RimO subfamily. It depends on [4Fe-4S] cluster as a cofactor.

It localises to the cytoplasm. It catalyses the reaction L-aspartate(89)-[ribosomal protein uS12]-hydrogen + (sulfur carrier)-SH + AH2 + 2 S-adenosyl-L-methionine = 3-methylsulfanyl-L-aspartate(89)-[ribosomal protein uS12]-hydrogen + (sulfur carrier)-H + 5'-deoxyadenosine + L-methionine + A + S-adenosyl-L-homocysteine + 2 H(+). In terms of biological role, catalyzes the methylthiolation of an aspartic acid residue of ribosomal protein uS12. This is Ribosomal protein uS12 methylthiotransferase RimO from Anaeromyxobacter sp. (strain Fw109-5).